The sequence spans 81 residues: Thrombin-like enzyme collinein-3 (81 aa).

The active site involves aspartate 4. A disulfide bridge links cysteine 51 with cysteine 68.

Monomer. Expressed by the vanom gland.

The protein resides in the secreted. Its function is as follows. Thrombin-like snake venom serine protease. In Crotalus durissus collilineatus (Brazilian rattlesnake), this protein is Thrombin-like enzyme collinein-3.